The sequence spans 210 residues: MRTRSAPDDTTAPGRASAAGYLDGQLLVAMPGMADERFARSVIYLCAHSAEGAMGIIVNKPAADLNMPDLLVQLDIIRQDDAIRLPNRVGHMPVLMGGPVESSRGFVLHSPDFHIDQSTLLIDDGICLTATVEILRAIAAGTGPRDAVLALGYAGWQPGQLESEIQANGWLHCPADPDLIFNAALDAKYDRALRAIGIEPAMLSMSAGHA.

The protein belongs to the UPF0301 (AlgH) family.

This Methylobacterium sp. (strain 4-46) protein is UPF0301 protein M446_6268.